Here is a 273-residue protein sequence, read N- to C-terminus: MYRLAAFDMDGTLLMRDHKIGSITLNALHQLADAGVTLTFATGRHYLDMKGILSHSGLNGYLITGNGTRVCDAEGNPLYGMDLPAELVEFVLRTPWQTNASIHLFRDDGWFTDRNDPDLLIAHTTSGFHFQLTEWDELPLTGNHKFCFIASHQELVELKAQLEQQMSGEADFCFSATDCLEVLPRGCNKGVALEKLSHHLDLTLADCMAFGDAMNDKEMLSRVGRGLVMGNALPQLKQELPQLQIIGRCEQQGVAHYLHHWLSSPHLTYSPEF.

Residue aspartate 8 is the Nucleophile of the active site. Residues aspartate 8, aspartate 10, and aspartate 212 each contribute to the Mg(2+) site.

Belongs to the HAD-like hydrolase superfamily. Cof family. The cofactor is Mg(2+).

It carries out the reaction 4-amino-2-methyl-5-(diphosphooxymethyl)pyrimidine + H2O = 4-amino-2-methyl-5-(phosphooxymethyl)pyrimidine + phosphate + H(+). Catalyzes the hydrolysis of 4-amino-2-methyl-5-hydroxymethylpyrimidine pyrophosphate (HMP-PP) to 4-amino-2-methyl-5-hydroxymethylpyrimidine phosphate (HMP-P). In Yersinia pseudotuberculosis serotype O:1b (strain IP 31758), this protein is HMP-PP phosphatase.